We begin with the raw amino-acid sequence, 278 residues long: Dermonecrotic toxin LhSicTox-alphaIV1ii (278 aa).

Histidine 5 is a catalytic residue. The Mg(2+) site is built by glutamate 25 and aspartate 27. Histidine 41 functions as the Nucleophile in the catalytic mechanism. Intrachain disulfides connect cysteine 45–cysteine 51 and cysteine 47–cysteine 192. Aspartate 85 contributes to the Mg(2+) binding site.

This sequence belongs to the arthropod phospholipase D family. Class II subfamily. The cofactor is Mg(2+). In terms of tissue distribution, expressed by the venom gland.

Its subcellular location is the secreted. The catalysed reaction is an N-(acyl)-sphingosylphosphocholine = an N-(acyl)-sphingosyl-1,3-cyclic phosphate + choline. It carries out the reaction an N-(acyl)-sphingosylphosphoethanolamine = an N-(acyl)-sphingosyl-1,3-cyclic phosphate + ethanolamine. It catalyses the reaction a 1-acyl-sn-glycero-3-phosphocholine = a 1-acyl-sn-glycero-2,3-cyclic phosphate + choline. The enzyme catalyses a 1-acyl-sn-glycero-3-phosphoethanolamine = a 1-acyl-sn-glycero-2,3-cyclic phosphate + ethanolamine. Its function is as follows. Dermonecrotic toxins cleave the phosphodiester linkage between the phosphate and headgroup of certain phospholipids (sphingolipid and lysolipid substrates), forming an alcohol (often choline) and a cyclic phosphate. This toxin acts on sphingomyelin (SM). It may also act on ceramide phosphoethanolamine (CPE), lysophosphatidylcholine (LPC) and lysophosphatidylethanolamine (LPE), but not on lysophosphatidylserine (LPS), and lysophosphatidylglycerol (LPG). It acts by transphosphatidylation, releasing exclusively cyclic phosphate products as second products. Induces dermonecrosis, hemolysis, increased vascular permeability, edema, inflammatory response, and platelet aggregation. This is Dermonecrotic toxin LhSicTox-alphaIV1ii from Loxosceles hirsuta (Recluse spider).